Here is a 187-residue protein sequence, read N- to C-terminus: Large ribosomal subunit protein uL22B (187 aa).

The protein belongs to the universal ribosomal protein uL22 family. In terms of assembly, component of the large ribosomal subunit (LSU). Mature yeast ribosomes consist of a small (40S) and a large (60S) subunit. The 40S small subunit contains 1 molecule of ribosomal RNA (18S rRNA) and at least 33 different proteins. The large 60S subunit contains 3 rRNA molecules (25S, 5.8S and 5S rRNA) and at least 46 different proteins. uL22 is associated with the polypeptide exit tunnel.

Its subcellular location is the cytoplasm. In terms of biological role, component of the ribosome, a large ribonucleoprotein complex responsible for the synthesis of proteins in the cell. The small ribosomal subunit (SSU) binds messenger RNAs (mRNAs) and translates the encoded message by selecting cognate aminoacyl-transfer RNA (tRNA) molecules. The large subunit (LSU) contains the ribosomal catalytic site termed the peptidyl transferase center (PTC), which catalyzes the formation of peptide bonds, thereby polymerizing the amino acids delivered by tRNAs into a polypeptide chain. The nascent polypeptides leave the ribosome through a tunnel in the LSU and interact with protein factors that function in enzymatic processing, targeting, and the membrane insertion of nascent chains at the exit of the ribosomal tunnel. In Schizosaccharomyces pombe (strain 972 / ATCC 24843) (Fission yeast), this protein is Large ribosomal subunit protein uL22B (rpl1702).